We begin with the raw amino-acid sequence, 660 residues long: Protein SCARECROW 2 (660 aa).

Disordered regions lie at residues 1–33 and 190–286; these read MGSSSLLLFPSSSSSATHSSYSPSSSSHAITSL and SDPA…KQRD. Positions 192-229 are enriched in pro residues; sequence PAPPPPPPSHPALLPPDATAPPPPPTSVAALPPPPPAQ. The segment covering 259–272 has biased composition (low complexity); that stretch reads AAAAAAAAAAAAAA. The stretch at 262-289 forms a coiled coil; sequence AAAAAAAAAAAAKERKEEQRRKQRDEEG. The segment covering 273–286 has biased composition (basic and acidic residues); sequence AKERKEEQRRKQRD. The region spanning 283 to 653 is the GRAS domain; sequence KQRDEEGLHL…LCLLTASAWR (371 aa). The leucine repeat I (LRI) stretch occupies residues 290 to 354; that stretch reads LHLLTLLLQC…VSSCLGLYAP (65 aa). The LxCxE motif motif lies at 297–301; that stretch reads LQCAE. The VHIID stretch occupies residues 373-438; sequence FQVFNGISPF…GGPPRVRLTG (66 aa). The VHIID signature appears at 404 to 408; it reads VHIID. The leucine repeat II (LRII) stretch occupies residues 448–480; the sequence is ATGKRLSDFADTLGLPFEFCPVADKAGNLDPEK. A PFYRE region spans residues 489–576; sequence VAVHWLRHSL…QQLLSREIRN (88 aa). The interval 579–653 is SAW; the sequence is AVGGPARTGD…LCLLTASAWR (75 aa).

This sequence belongs to the GRAS family.

It is found in the cytoplasm. In terms of biological role, probable transcription factor involved in asmmetric cell division in the cortex/endodermis progenitor cell and in the process of stomata and ligule formation in leaves. The protein is Protein SCARECROW 2 (SCR2) of Oryza sativa subsp. indica (Rice).